We begin with the raw amino-acid sequence, 228 residues long: Ribonuclease 3 1 (228 aa).

The RNase III domain occupies 1-124 (MYKLLMFRDD…VIGAYYLDNN (124 aa)). Glu37 serves as a coordination point for Mg(2+). The active site involves Asp41. Positions 110 and 113 each coordinate Mg(2+). The active site involves Glu113. In terms of domain architecture, DRBM spans 153 to 223 (DSKNRFQEWV…AENALANLNK (71 aa)).

Belongs to the ribonuclease III family. In terms of assembly, homodimer. The cofactor is Mg(2+).

It is found in the cytoplasm. It carries out the reaction Endonucleolytic cleavage to 5'-phosphomonoester.. Functionally, digests double-stranded RNA. Involved in the processing of primary rRNA transcript to yield the immediate precursors to the large and small rRNAs (23S and 16S). Processes some mRNAs, and tRNAs when they are encoded in the rRNA operon. Processes pre-crRNA and tracrRNA of type II CRISPR loci if present in the organism. The chain is Ribonuclease 3 1 from Nostoc sp. (strain PCC 7120 / SAG 25.82 / UTEX 2576).